The sequence spans 239 residues: BURP domain-containing protein 6 (239 aa).

Residues 1 to 19 (MPGAIRDLINPVSSAASAS) form the signal peptide. Residues 28–239 (FFLEKDLFPG…PQDDMLWVRN (212 aa)) form the BURP domain.

As to expression, expressed in leaves and shoot.

The polypeptide is BURP domain-containing protein 6 (BURP6) (Oryza sativa subsp. japonica (Rice)).